Here is a 132-residue protein sequence, read N- to C-terminus: ATP synthase epsilon chain (132 aa).

It belongs to the ATPase epsilon chain family. In terms of assembly, F-type ATPases have 2 components, CF(1) - the catalytic core - and CF(0) - the membrane proton channel. CF(1) has five subunits: alpha(3), beta(3), gamma(1), delta(1), epsilon(1). CF(0) has three main subunits: a, b and c.

It localises to the cell membrane. Produces ATP from ADP in the presence of a proton gradient across the membrane. In Bacillus sp. (strain PS3), this protein is ATP synthase epsilon chain (atpC).